Here is a 77-residue protein sequence, read N- to C-terminus: Small ribosomal subunit protein uS17 (77 aa).

Belongs to the universal ribosomal protein uS17 family. In terms of assembly, part of the 30S ribosomal subunit.

In terms of biological role, one of the primary rRNA binding proteins, it binds specifically to the 5'-end of 16S ribosomal RNA. The polypeptide is Small ribosomal subunit protein uS17 (Rickettsia bellii (strain OSU 85-389)).